The following is a 198-amino-acid chain: ATP-dependent Clp protease proteolytic subunit 1 (198 aa).

The Nucleophile role is filled by Ser-98. The active site involves His-123.

This sequence belongs to the peptidase S14 family. As to quaternary structure, fourteen ClpP subunits assemble into 2 heptameric rings which stack back to back to give a disk-like structure with a central cavity, resembling the structure of eukaryotic proteasomes.

Its subcellular location is the cytoplasm. It carries out the reaction Hydrolysis of proteins to small peptides in the presence of ATP and magnesium. alpha-casein is the usual test substrate. In the absence of ATP, only oligopeptides shorter than five residues are hydrolyzed (such as succinyl-Leu-Tyr-|-NHMec, and Leu-Tyr-Leu-|-Tyr-Trp, in which cleavage of the -Tyr-|-Leu- and -Tyr-|-Trp bonds also occurs).. Cleaves peptides in various proteins in a process that requires ATP hydrolysis. Has a chymotrypsin-like activity. Plays a major role in the degradation of misfolded proteins. This Leptospira interrogans serogroup Icterohaemorrhagiae serovar copenhageni (strain Fiocruz L1-130) protein is ATP-dependent Clp protease proteolytic subunit 1.